A 77-amino-acid chain; its full sequence is Omega-conotoxin TxVII (77 aa).

Residues 1 to 22 (MKLTCMMIVAVLFLTAWTFATA) form the signal peptide. Positions 23-49 (DDSGNGLENLFPKAHHEMKNPEASKLN) are excised as a propeptide. 3 disulfides stabilise this stretch: C52–C67, C59–C71, and C66–C75.

Expressed by the venom duct.

The protein localises to the secreted. In terms of biological role, omega-conotoxins act at presynaptic membranes, they bind and block voltage-gated calcium channels (Cav). Specifically acts on L-type channels. It blocks molluscan dihydropyridine-sensitive calcium channels. The polypeptide is Omega-conotoxin TxVII (Conus textile (Cloth-of-gold cone)).